The following is a 100-amino-acid chain: Small ribosomal subunit protein uS14 (100 aa).

It belongs to the universal ribosomal protein uS14 family. Part of the 30S ribosomal subunit. Contacts proteins S3 and S10.

Its function is as follows. Binds 16S rRNA, required for the assembly of 30S particles and may also be responsible for determining the conformation of the 16S rRNA at the A site. The polypeptide is Small ribosomal subunit protein uS14 (Acaryochloris marina (strain MBIC 11017)).